Reading from the N-terminus, the 188-residue chain is U1 small nuclear ribonucleoprotein C-2 (188 aa).

The Matrin-type zinc finger occupies tyrosine 4 to aspartate 36. The disordered stretch occupies residues phenylalanine 57 to glycine 188. A compositionally biased stretch (pro residues) spans glycine 72–proline 82. The span at alanine 109–glycine 124 shows a compositional bias: low complexity. Pro residues predominate over residues serine 125–methionine 141.

Belongs to the U1 small nuclear ribonucleoprotein C family. As to quaternary structure, U1 snRNP is composed of the 7 core Sm proteins B/B', D1, D2, D3, E, F and G that assemble in a heptameric protein ring on the Sm site of the small nuclear RNA to form the core snRNP, and at least 3 U1 snRNP-specific proteins U1-70K, U1-A and U1-C. U1-C interacts with U1 snRNA and the 5' splice-site region of the pre-mRNA.

It is found in the nucleus. Component of the spliceosomal U1 snRNP, which is essential for recognition of the pre-mRNA 5' splice-site and the subsequent assembly of the spliceosome. U1-C is directly involved in initial 5' splice-site recognition for both constitutive and regulated alternative splicing. The interaction with the 5' splice-site seems to precede base-pairing between the pre-mRNA and the U1 snRNA. Stimulates commitment or early (E) complex formation by stabilizing the base pairing of the 5' end of the U1 snRNA and the 5' splice-site region. In Puccinia graminis f. sp. tritici (strain CRL 75-36-700-3 / race SCCL) (Black stem rust fungus), this protein is U1 small nuclear ribonucleoprotein C-2.